A 504-amino-acid chain; its full sequence is Cytochrome P450 monooxygenase gsfF (504 aa).

Residues 1–16 form the signal peptide; that stretch reads MTVLFILSAGLVAVFG. N-linked (GlcNAc...) asparagine glycosylation is found at Asn97 and Asn150. Cys450 serves as a coordination point for heme.

This sequence belongs to the cytochrome P450 family. Requires heme as cofactor.

The catalysed reaction is griseophenone B + reduced [NADPH--hemoprotein reductase] + O2 + H(+) = desmethyl-dehydrogriseofulvin + oxidized [NADPH--hemoprotein reductase] + 2 H2O. The protein operates within secondary metabolite biosynthesis; terpenoid biosynthesis. Its function is as follows. Cytochrome P450 monooxygenase; part of the gene cluster that mediates the biosynthesis of griseofulvin, an important antifungal drug that has been in use for a long time for treating dermatophyte infections. The first step of the pathway is the formation of the heptaketide backbone by gsfA which is initiated by priming with acetyl-CoA, followed by sequential condensations of 6 malonyl-CoA units. The resulting benzophenone can undergo a spontaneous dehydration to form norlichexanthone. However, the true precursor for the griseofulvin biosynthesis is not norlichexanthone, but the heptaketide benzophenone that is O-methylated at 3-OH by gsfB to produce griseophenone D which is further methylated at 9-OH by gsfC to yield griseophenone C. Griseophenone C is then substrate of halogenase gsfI which is responsible for the regio-specific chlorination at the C13 position to form griseophenone B. The cytochrome P450 gsfF catalyzes the coupling of orcinol and phloroglucinol rings in griseophenone B to form desmethyl-dehydrogriseofulvin A which is further methylated at 5-OH by gsfD to yield dehydrogriseofulvin. Finally, gsfE performs stereospecific reduction of enone 18 of dehydrogriseofulvin to afford the final product griseofulvin. This is Cytochrome P450 monooxygenase gsfF from Penicillium aethiopicum.